Consider the following 63-residue polypeptide: uncharacterized protein (63 aa).

This is an uncharacterized protein from Saccharomyces cerevisiae (strain ATCC 204508 / S288c) (Baker's yeast).